The primary structure comprises 101 residues: NADH-quinone oxidoreductase subunit K (101 aa).

Transmembrane regions (helical) follow at residues 4 to 24 (LSHYLVLGAILFAISVVGIFL), 30 to 50 (IVLLMAIELMLLAVNLNFIAF), and 61 to 81 (IFVFFILTVAAAESAIGLAIL).

The protein belongs to the complex I subunit 4L family. As to quaternary structure, NDH-1 is composed of 14 different subunits. Subunits NuoA, H, J, K, L, M, N constitute the membrane sector of the complex.

Its subcellular location is the cell inner membrane. The enzyme catalyses a quinone + NADH + 5 H(+)(in) = a quinol + NAD(+) + 4 H(+)(out). Functionally, NDH-1 shuttles electrons from NADH, via FMN and iron-sulfur (Fe-S) centers, to quinones in the respiratory chain. The immediate electron acceptor for the enzyme in this species is believed to be ubiquinone. Couples the redox reaction to proton translocation (for every two electrons transferred, four hydrogen ions are translocated across the cytoplasmic membrane), and thus conserves the redox energy in a proton gradient. In Aromatoleum aromaticum (strain DSM 19018 / LMG 30748 / EbN1) (Azoarcus sp. (strain EbN1)), this protein is NADH-quinone oxidoreductase subunit K.